The chain runs to 328 residues: MGTAMTYAVIAGSGSFLPERVVSNDELAAELATRNISTSDEWIVERTGIRQRHLAERGVTTSFLATEAARRALADAGVSAAEVDLIIVATSTPDYVFPSTACLVQANLGAKGGAAFDVQAVCSGFVYALSTADAFVRAGRARCALVIGAEVFSRILDWNDRSTCVLFGDGAGAVVLKAGSKPGILAAQLHADGSQTKILCAAGNVAYGDVTGDPFLRMDGQAVFKQAVTVLDRSARDVCAEAGVELAELDWLVPHQANVRILNFLARKLQVPTEKVVITVDSHANTSAASVPLALDAARRDGRIKPGQLVLMQGVGGGFTWGSVLARM.

Residues C122 and H255 contribute to the active site. The tract at residues 256–260 is ACP-binding; sequence QANVR. N285 is a catalytic residue.

The protein belongs to the thiolase-like superfamily. FabH family. As to quaternary structure, homodimer.

The protein localises to the cytoplasm. The enzyme catalyses malonyl-[ACP] + acetyl-CoA + H(+) = 3-oxobutanoyl-[ACP] + CO2 + CoA. It participates in lipid metabolism; fatty acid biosynthesis. In terms of biological role, catalyzes the condensation reaction of fatty acid synthesis by the addition to an acyl acceptor of two carbons from malonyl-ACP. Catalyzes the first condensation reaction which initiates fatty acid synthesis and may therefore play a role in governing the total rate of fatty acid production. Possesses both acetoacetyl-ACP synthase and acetyl transacylase activities. Its substrate specificity determines the biosynthesis of branched-chain and/or straight-chain of fatty acids. The chain is Beta-ketoacyl-[acyl-carrier-protein] synthase III from Bordetella petrii (strain ATCC BAA-461 / DSM 12804 / CCUG 43448).